We begin with the raw amino-acid sequence, 165 residues long: Sec-independent protein translocase protein TatB (165 aa).

The helical transmembrane segment at 1–21 threads the bilayer; sequence MFDVSFTELIVIGVVALIVLG. Residues 67–84 show a composition bias toward polar residues; it reads DSTAQDVNQSLRSATDSL. A disordered region spans residues 67–165; that stretch reads DSTAQDVNQS…PKSPSTGNAT (99 aa). Positions 127 to 159 are enriched in low complexity; the sequence is KLPGTPATLPATAAAEPTPAAPAASQAEAPKSP.

This sequence belongs to the TatB family. In terms of assembly, the Tat system comprises two distinct complexes: a TatABC complex, containing multiple copies of TatA, TatB and TatC subunits, and a separate TatA complex, containing only TatA subunits. Substrates initially bind to the TatABC complex, which probably triggers association of the separate TatA complex to form the active translocon.

It localises to the cell inner membrane. Its function is as follows. Part of the twin-arginine translocation (Tat) system that transports large folded proteins containing a characteristic twin-arginine motif in their signal peptide across membranes. Together with TatC, TatB is part of a receptor directly interacting with Tat signal peptides. TatB may form an oligomeric binding site that transiently accommodates folded Tat precursor proteins before their translocation. In Bordetella avium (strain 197N), this protein is Sec-independent protein translocase protein TatB.